The chain runs to 480 residues: MERDEPPPSGGGGGGGSAGFLEPPAALPPPPRNGFCQDELAELDPGTISVSDDRAEQRTCLICGDRATGLHYGIISCEGCKGFFKRSICNKRVYRCSRDKNCVMSRKQRNRCQYCRLLKCLQMGMNRKAIREDGMPGGRNKSIGPVQISEEEIERIMSGQEFEEEANHWSNHGDSDHSSPGNRASESNQPSPGSTLSSSRSVELNGFMAFREQYMGMSVPPHYQYIPHLFSYSGHSPLLPQQARSLDPQSYSLIHQLLSAEDLEPLGTPMLIEDGYAVTQAELFALLCRLADELLFRQIAWIKKLPFFCELSIKDYTCLLSSTWQELILLSSLTVYSKQIFGELADVTAKYSPSDEELHRFSDEGMEVIERLIYLYHKFHQLKVSNEEYACMKAINFLNQDIRGLTSASQLEQLNKRYWYICQDFTEYKYTHQPNRFPDLMMCLPEIRYIAGKMVNVPLEQLPLLFKVVLHSCKTSVGKE.

The interval 1–32 (MERDEPPPSGGGGGGGSAGFLEPPAALPPPPR) is disordered. Residues 57-132 (QRTCLICGDR…MGMNRKAIRE (76 aa)) constitute a DNA-binding region (nuclear receptor). Positions 60, 63, 77, 80, 96, 102, 112, and 115 each coordinate Zn(2+). 2 NR C4-type zinc fingers span residues 60–80 (CLIC…CEGC) and 96–120 (CSRD…LLKC). Disordered regions lie at residues 131-150 (REDG…QISE) and 162-199 (FEEE…LSSS). Basic and acidic residues predominate over residues 165 to 177 (EANHWSNHGDSDH). Positions 172-253 (HGDSDHSSPG…RSLDPQSYSL (82 aa)) are sufficient for interaction with UIMC1. The segment covering 187 to 199 (SNQPSPGSTLSSS) has biased composition (low complexity). One can recognise an NR LBD domain in the interval 249–480 (QSYSLIHQLL…HSCKTSVGKE (232 aa)).

Belongs to the nuclear hormone receptor family. NR6 subfamily. As to quaternary structure, homodimer. Interacts with UIMC1. As to expression, shows highest expression in the germ cells of the adult testis.

It is found in the nucleus. In terms of biological role, orphan nuclear receptor that binds to a response element containing the sequence 5'-TCAAGGTCA-3'. Acts as a regulator of embryonic stem cell pluripotency by mediating repression of POU5F1/OCT4: binds to the DR0 element within the POU5F1/OCT4 promoter and inhibits POU5F1/OCT4 expression during embryonic stem cell differentiation. Involved in the regulation of gene expression in germ cell development during gametogenesis. This Homo sapiens (Human) protein is Nuclear receptor subfamily 6 group A member 1 (NR6A1).